The primary structure comprises 310 residues: Haloalkane dehalogenase (310 aa).

The AB hydrolase-1 domain maps to 49–295; that stretch reads VFLCLHGEPT…DAGHFVQEFG (247 aa). Catalysis depends on Asp124, which acts as the Nucleophile. The chloride site is built by Trp125 and Trp175. The active-site Proton donor is Asp260. Residue His289 is the Proton acceptor of the active site.

This sequence belongs to the haloalkane dehalogenase family. Type 1 subfamily. As to quaternary structure, monomer.

It carries out the reaction 1-haloalkane + H2O = a halide anion + a primary alcohol + H(+). The catalysed reaction is 1,2-dichloroethane + H2O = 2-chloroethanol + chloride + H(+). The protein operates within xenobiotic degradation; 1,2-dichloroethane degradation; glycolate from 1,2-dichloroethane: step 1/4. Inhibited by thiol reagents such as p-chloromercuribenzoate and iodoacetamide. Its function is as follows. Catalyzes hydrolytic cleavage of carbon-halogen bonds in halogenated aliphatic compounds, leading to the formation of the corresponding primary alcohols, halide ions and protons. Has a broad substrate specificity, which includes terminally mono- and di- chlorinated and brominated alkanes (up to C4 only). The highest activity was found with 1,2-dichloroethane, 1,3-dichloropropane, and 1,2-dibromoethane. This Xanthobacter autotrophicus protein is Haloalkane dehalogenase (dhlA).